A 274-amino-acid chain; its full sequence is Mitochondrial outer membrane protein porin 4 (274 aa).

Position 2 is an N-acetylglycine (Gly-2). Residue Ser-76 is modified to Phosphoserine.

The protein belongs to the eukaryotic mitochondrial porin (TC 1.B.8.1) family. In terms of tissue distribution, widely expressed.

Its subcellular location is the cell membrane. The protein resides in the mitochondrion outer membrane. Functionally, forms a channel through the mitochondrial outer membrane that allows diffusion of small hydrophilic molecules. The channel adopts an open conformation at low or zero membrane potential and a closed conformation at potentials above 30-40 mV. The open state has a weak anion selectivity whereas the closed state is cation-selective. Involved in plant growth and development at the vegetative and reproductive stages. Is important for leaf and pollen development and mitochondrial membrane potential steady state. May be involved in disease resistance. This is Mitochondrial outer membrane protein porin 4 (VDAC4) from Arabidopsis thaliana (Mouse-ear cress).